The sequence spans 129 residues: Follitropin subunit beta (129 aa).

The first 20 residues, 1–20, serve as a signal peptide directing secretion; it reads MKTAQFYIFFFCWKAIWCNG. Intrachain disulfides connect C21–C69, C35–C84, C38–C122, C46–C100, C50–C102, and C105–C112. N-linked (GlcNAc...) asparagine glycosylation is found at N25 and N42.

This sequence belongs to the glycoprotein hormones subunit beta family. In terms of assembly, heterodimer. The active follitropin is a heterodimer composed of an alpha chain/CGA shared with other hormones and a unique beta chain/FSHB shown here.

It localises to the secreted. Together with the alpha chain CGA constitutes follitropin, the follicle-stimulating hormone, and provides its biological specificity to the hormone heterodimer. Binds FSHR, a G protein-coupled receptor, on target cells to activate downstream signaling pathways. Follitropin is involved in follicle development and spermatogenesis in reproductive organs. This is Follitropin subunit beta (FSHB) from Monodelphis domestica (Gray short-tailed opossum).